Here is an 80-residue protein sequence, read N- to C-terminus: Exodeoxyribonuclease 7 small subunit (80 aa).

This sequence belongs to the XseB family. As to quaternary structure, heterooligomer composed of large and small subunits.

It localises to the cytoplasm. It carries out the reaction Exonucleolytic cleavage in either 5'- to 3'- or 3'- to 5'-direction to yield nucleoside 5'-phosphates.. Bidirectionally degrades single-stranded DNA into large acid-insoluble oligonucleotides, which are then degraded further into small acid-soluble oligonucleotides. This is Exodeoxyribonuclease 7 small subunit from Caulobacter sp. (strain K31).